A 311-amino-acid polypeptide reads, in one-letter code: N-acetyl-gamma-glutamyl-phosphate reductase (311 aa).

C117 is a catalytic residue.

The protein belongs to the NAGSA dehydrogenase family. Type 2 subfamily.

It is found in the cytoplasm. The catalysed reaction is N-acetyl-L-glutamate 5-semialdehyde + phosphate + NADP(+) = N-acetyl-L-glutamyl 5-phosphate + NADPH + H(+). It functions in the pathway amino-acid biosynthesis; L-arginine biosynthesis; N(2)-acetyl-L-ornithine from L-glutamate: step 3/4. Its function is as follows. Catalyzes the NADPH-dependent reduction of N-acetyl-5-glutamyl phosphate to yield N-acetyl-L-glutamate 5-semialdehyde. The sequence is that of N-acetyl-gamma-glutamyl-phosphate reductase from Brucella anthropi (strain ATCC 49188 / DSM 6882 / CCUG 24695 / JCM 21032 / LMG 3331 / NBRC 15819 / NCTC 12168 / Alc 37) (Ochrobactrum anthropi).